The primary structure comprises 95 residues: Mammaglobin-B (95 aa).

An N-terminal signal peptide occupies residues 1-18; the sequence is MKLLMVLMLAALLLHCYA. An N-linked (GlcNAc...) asparagine glycan is attached at Asn-68.

As to quaternary structure, heterodimer of a lipophilin A and a lipophilin C (mammaglobin B) monomer associated head to head. In terms of tissue distribution, expressed in thymus, trachea, kidney, steroid responsive tissues (prostate, testis, uterus, breast and ovary) and salivary gland.

It localises to the secreted. May bind androgens and other steroids, may also bind estramustine, a chemotherapeutic agent used for prostate cancer. May be under transcriptional regulation of steroid hormones. The chain is Mammaglobin-B (SCGB2A1) from Homo sapiens (Human).